A 371-amino-acid polypeptide reads, in one-letter code: MHIEQIKLTNYRNYDALALNFSPKINVFIGENAQGKTNVMESIYVLAMAKSHRTTNDKELIRWDSDYGKIEGAVQKRHGILPIELTITKKGKKGKINHIEQSRLSHYIGQMNVVMFAPEDLNVVKGSPQIRRRFIDMEIGQISPVYLHDLLTFQKVLKQRNHFLKMNQGKSMSNDVMYEVYNEQYIHAATQIIRKRFQFMDLLQEWAEPIHAGISQGKETLIIKYRTVAGIEKEHSSSEIENTLHQKLMEAREREFDRGVTLVGPHRDDLQFLVNGYDVQTYGSQGQQRTTALSLKLAEIELIKQETNETPILLLDDVLSELDDYRQSHLLNTIQGEVQTFVTTTSVEGIHHETMEQAQLFHVKQGAIEKS.

30–37 contacts ATP; it reads GENAQGKT.

It belongs to the RecF family.

It is found in the cytoplasm. In terms of biological role, the RecF protein is involved in DNA metabolism; it is required for DNA replication and normal SOS inducibility. RecF binds preferentially to single-stranded, linear DNA. It also seems to bind ATP. In Lysinibacillus sphaericus (strain C3-41), this protein is DNA replication and repair protein RecF.